A 705-amino-acid chain; its full sequence is Putative membrane protein SCO0839 (705 aa).

Transmembrane regions (helical) follow at residues 16–36 (WLVP…LGPY), 177–197 (GIDG…LLLV), 202–222 (LLPL…CAIV), 237–257 (VQGI…LLLT), 281–301 (SWGA…ALLL), 316–336 (IGIV…LVLL), 373–393 (IWAL…TLSS), 529–549 (LIVP…LRSL), 554–574 (LLVA…ALVF), 587–607 (VPLY…IFLM), 627–647 (LTAT…TFAA), and 648–668 (LGVI…FGVL).

Belongs to the resistance-nodulation-cell division (RND) (TC 2.A.6) family. MmpL subfamily.

The protein localises to the cell membrane. In Streptomyces coelicolor (strain ATCC BAA-471 / A3(2) / M145), this protein is Putative membrane protein SCO0839.